Consider the following 140-residue polypeptide: Hemoglobin subunit alpha (140 aa).

Residues 1-140 enclose the Globin domain; it reads LSAADKGHVK…VSTVLTSKYR (140 aa). A Phosphoserine modification is found at S2. Residues K6 and K10 each carry the N6-succinyllysine modification. The residue at position 15 (K15) is an N6-acetyllysine; alternate. N6-succinyllysine; alternate is present on K15. Phosphotyrosine is present on Y23. Phosphoserine is present on S34. K39 is subject to N6-succinyllysine. S48 is modified (phosphoserine). H57 lines the O2 pocket. Heme b is bound at residue H86. Residue S101 is modified to Phosphoserine. T107 bears the Phosphothreonine mark. The residue at position 123 (S123) is a Phosphoserine. Phosphothreonine is present on residues T133 and T136. S137 is modified (phosphoserine).

This sequence belongs to the globin family. Heterotetramer of two alpha chains and two beta chains. As to expression, red blood cells.

Functionally, involved in oxygen transport from the lung to the various peripheral tissues. Hemopressin acts as an antagonist peptide of the cannabinoid receptor CNR1. Hemopressin-binding efficiently blocks cannabinoid receptor CNR1 and subsequent signaling. The protein is Hemoglobin subunit alpha (HBA) of Tragelaphus strepsiceros (Greater kudu).